Here is a 299-residue protein sequence, read N- to C-terminus: Peroxisomal biogenesis factor 19 (299 aa).

Position 2 is an N-acetylalanine (Ala2). The tract at residues 2–56 (AAAEGGCGAGVEADRELEELLESALDDFDKAKPSPAPSPTISAPDASGPQKRSPG) is docking to the peroxisome membrane and binding to PEX3. Positions 2-91 (AAAEGGCGAG…QATAEFEKAM (90 aa)) are necessary for PEX19 function on peroxisome biogenesis. The tract at residues 25-63 (ALDDFDKAKPSPAPSPTISAPDASGPQKRSPGDTAKDAL) is disordered. Residues Ser35, Ser39, Ser54, and Ser66 each carry the phosphoserine modification. Thr236 is subject to Phosphothreonine. Cys296 carries the cysteine methyl ester modification. A lipid anchor (S-farnesyl cysteine) is attached at Cys296. The propeptide at 297–299 (LIM) is removed in mature form.

This sequence belongs to the peroxin-19 family. In terms of assembly, interacts with a broad range of peroxisomal membrane proteins, including PEX3, PEX10, PEX11A, PEX11B, PEX12, PEX13, PEX14 and PEX16, PXMP2/PMP22, PXMP4/PMP24, SLC25A17/PMP34, ABCD1/ALDP, ABCD2/ALDRP, and ABCD3/PMP70. Also interacts with the tumor suppressor CDKN2A/p19ARF.

The protein localises to the cytoplasm. It is found in the peroxisome membrane. Necessary for early peroxisomal biogenesis. Acts both as a cytosolic chaperone and as an import receptor for peroxisomal membrane proteins (PMPs). Binds and stabilizes newly synthesized PMPs in the cytoplasm by interacting with their hydrophobic membrane-spanning domains, and targets them to the peroxisome membrane by binding to the integral membrane protein PEX3. Excludes CDKN2A from the nucleus and prevents its interaction with MDM2, which results in active degradation of TP53. This Rattus norvegicus (Rat) protein is Peroxisomal biogenesis factor 19 (Pex19).